The following is a 300-amino-acid chain: MKIDLSRLVTESRNPASAEIDTLSTVEMLRVINQEDQKVALAVEAVLPHIAQAVDAITHAFAHGGRLIYMGAGTSGRLGILDASECPPTYGTPAELVVGLIAGGHTAILKAVENAEDNRELAQNDLKSLNLTANDVVVGIAASGRTPYVLGGLEYATLIGATTVSIACNPVCPMADAAQIAILPVVGPEVVTGSSRMKAGTAQKLVLNMLTSGAMIRSGKVFGNLMVDVEATNAKLIQRQTNIVVEATGVCAEEAEEALKACDRHCKTAILMILSGLDAEQAKTKLQQHNGFIRAALNDK.

Positions 57–220 constitute an SIS domain; it reads ITHAFAHGGR…TSGAMIRSGK (164 aa). Catalysis depends on E85, which acts as the Proton donor. Residue E116 is part of the active site.

The protein belongs to the GCKR-like family. MurNAc-6-P etherase subfamily. Homodimer.

It carries out the reaction N-acetyl-D-muramate 6-phosphate + H2O = N-acetyl-D-glucosamine 6-phosphate + (R)-lactate. The protein operates within amino-sugar metabolism; 1,6-anhydro-N-acetylmuramate degradation. It functions in the pathway amino-sugar metabolism; N-acetylmuramate degradation. It participates in cell wall biogenesis; peptidoglycan recycling. In terms of biological role, specifically catalyzes the cleavage of the D-lactyl ether substituent of MurNAc 6-phosphate, producing GlcNAc 6-phosphate and D-lactate. Together with AnmK, is also required for the utilization of anhydro-N-acetylmuramic acid (anhMurNAc) either imported from the medium or derived from its own cell wall murein, and thus plays a role in cell wall recycling. The protein is N-acetylmuramic acid 6-phosphate etherase of Vibrio vulnificus (strain CMCP6).